The primary structure comprises 155 residues: 6,7-dimethyl-8-ribityllumazine synthase (155 aa).

5-amino-6-(D-ribitylamino)uracil contacts are provided by residues Trp-24, 58–60, and 82–84; these read AFE and AVI. 87 to 88 contacts (2S)-2-hydroxy-3-oxobutyl phosphate; it reads GT. The active-site Proton donor is the His-90. Residue Phe-115 participates in 5-amino-6-(D-ribitylamino)uracil binding. (2S)-2-hydroxy-3-oxobutyl phosphate is bound at residue Arg-129.

This sequence belongs to the DMRL synthase family. In terms of assembly, forms an icosahedral capsid composed of 60 subunits, arranged as a dodecamer of pentamers.

It carries out the reaction (2S)-2-hydroxy-3-oxobutyl phosphate + 5-amino-6-(D-ribitylamino)uracil = 6,7-dimethyl-8-(1-D-ribityl)lumazine + phosphate + 2 H2O + H(+). It functions in the pathway cofactor biosynthesis; riboflavin biosynthesis; riboflavin from 2-hydroxy-3-oxobutyl phosphate and 5-amino-6-(D-ribitylamino)uracil: step 1/2. Its function is as follows. Catalyzes the formation of 6,7-dimethyl-8-ribityllumazine by condensation of 5-amino-6-(D-ribitylamino)uracil with 3,4-dihydroxy-2-butanone 4-phosphate. This is the penultimate step in the biosynthesis of riboflavin. The chain is 6,7-dimethyl-8-ribityllumazine synthase from Teredinibacter turnerae (strain ATCC 39867 / T7901).